The following is a 363-amino-acid chain: UDP-N-acetylglucosamine--N-acetylmuramyl-(pentapeptide) pyrophosphoryl-undecaprenol N-acetylglucosamine transferase (363 aa).

Residues 10-12, Asn124, Ser195, Ile249, and Gln294 contribute to the UDP-N-acetyl-alpha-D-glucosamine site; that span reads TGG.

Belongs to the glycosyltransferase 28 family. MurG subfamily.

The protein localises to the cell membrane. The enzyme catalyses Mur2Ac(oyl-L-Ala-gamma-D-Glu-L-Lys-D-Ala-D-Ala)-di-trans,octa-cis-undecaprenyl diphosphate + UDP-N-acetyl-alpha-D-glucosamine = beta-D-GlcNAc-(1-&gt;4)-Mur2Ac(oyl-L-Ala-gamma-D-Glu-L-Lys-D-Ala-D-Ala)-di-trans,octa-cis-undecaprenyl diphosphate + UDP + H(+). It participates in cell wall biogenesis; peptidoglycan biosynthesis. In terms of biological role, cell wall formation. Catalyzes the transfer of a GlcNAc subunit on undecaprenyl-pyrophosphoryl-MurNAc-pentapeptide (lipid intermediate I) to form undecaprenyl-pyrophosphoryl-MurNAc-(pentapeptide)GlcNAc (lipid intermediate II). In Leuconostoc mesenteroides subsp. mesenteroides (strain ATCC 8293 / DSM 20343 / BCRC 11652 / CCM 1803 / JCM 6124 / NCDO 523 / NBRC 100496 / NCIMB 8023 / NCTC 12954 / NRRL B-1118 / 37Y), this protein is UDP-N-acetylglucosamine--N-acetylmuramyl-(pentapeptide) pyrophosphoryl-undecaprenol N-acetylglucosamine transferase.